The chain runs to 218 residues: 3-isopropylmalate dehydratase small subunit (218 aa).

The protein belongs to the LeuD family. LeuD type 1 subfamily. As to quaternary structure, heterodimer of LeuC and LeuD.

It carries out the reaction (2R,3S)-3-isopropylmalate = (2S)-2-isopropylmalate. The protein operates within amino-acid biosynthesis; L-leucine biosynthesis; L-leucine from 3-methyl-2-oxobutanoate: step 2/4. In terms of biological role, catalyzes the isomerization between 2-isopropylmalate and 3-isopropylmalate, via the formation of 2-isopropylmaleate. The chain is 3-isopropylmalate dehydratase small subunit from Alkalilimnicola ehrlichii (strain ATCC BAA-1101 / DSM 17681 / MLHE-1).